The sequence spans 657 residues: Translation factor GUF1, mitochondrial (657 aa).

The transit peptide at 1 to 21 (MLKTLGLRSLCPSLGGRGFRR) directs the protein to the mitochondrion. The 185-residue stretch at 56–240 (ENYRNFSIVA…TIVDRIPPPT (185 aa)) folds into the tr-type G domain. GTP is bound by residues 65-72 (AHVDHGKS), 132-136 (DTPGH), and 186-189 (NKID).

Belongs to the TRAFAC class translation factor GTPase superfamily. Classic translation factor GTPase family. LepA subfamily.

It is found in the mitochondrion inner membrane. The enzyme catalyses GTP + H2O = GDP + phosphate + H(+). Functionally, promotes mitochondrial protein synthesis. May act as a fidelity factor of the translation reaction, by catalyzing a one-codon backward translocation of tRNAs on improperly translocated ribosomes. Binds to mitochondrial ribosomes in a GTP-dependent manner. In Candida glabrata (strain ATCC 2001 / BCRC 20586 / JCM 3761 / NBRC 0622 / NRRL Y-65 / CBS 138) (Yeast), this protein is Translation factor GUF1, mitochondrial.